A 269-amino-acid chain; its full sequence is Hydroxyethylthiazole kinase (269 aa).

Methionine 41 is a binding site for substrate. Positions 117 and 165 each coordinate ATP. Glycine 192 is a substrate binding site.

It belongs to the Thz kinase family. Requires Mg(2+) as cofactor.

It carries out the reaction 5-(2-hydroxyethyl)-4-methylthiazole + ATP = 4-methyl-5-(2-phosphooxyethyl)-thiazole + ADP + H(+). It participates in cofactor biosynthesis; thiamine diphosphate biosynthesis; 4-methyl-5-(2-phosphoethyl)-thiazole from 5-(2-hydroxyethyl)-4-methylthiazole: step 1/1. Catalyzes the phosphorylation of the hydroxyl group of 4-methyl-5-beta-hydroxyethylthiazole (THZ). The chain is Hydroxyethylthiazole kinase from Actinobacillus succinogenes (strain ATCC 55618 / DSM 22257 / CCUG 43843 / 130Z).